Consider the following 430-residue polypeptide: Probable proton-coupled zinc antiporter SLC30A4 (430 aa).

At 1–113 (MAGPGAWKRL…LLKQRKVKTR (113 aa)) the chain is on the cytoplasmic side. Position 36 is a phosphoserine (Ser36). The chain crosses the membrane as a helical span at residues 114–134 (LTIAAVLYLLFMIGELVGGYM). Over 135–143 (ANSLAIMTD) the chain is Lumenal. A helical membrane pass occupies residues 144–164 (ALHMLTDLSAIILTLLALWLS). Zn(2+) contacts are provided by His146 and Asp150. Residues 165–178 (SKSPTRRFTFGFHR) are Cytoplasmic-facing. A helical transmembrane segment spans residues 179 to 199 (LEVLSAMISVMLVYVLMGFLL). Topologically, residues 200–216 (YEAVQRTIHMNYEINGD) are lumenal. A helical transmembrane segment spans residues 217–237 (VMLITAAVGVAVNVIMGFLLN). Over 238 to 275 (QSGHHHSHAHSHSLPSNSPSMVSSGHNHGQDSLAVRAA) the chain is Cytoplasmic. The interval 240 to 265 (GHHHSHAHSHSLPSNSPSMVSSGHNH) is zinc binding. A disordered region spans residues 245 to 264 (HAHSHSLPSNSPSMVSSGHN). The span at 249 to 263 (HSLPSNSPSMVSSGH) shows a compositional bias: low complexity. The helical transmembrane segment at 276-296 (FVHALGDLVQSVGVLIAAYII) threads the bilayer. His278 and Asp282 together coordinate Zn(2+). Residues 297–311 (RFKPEYKIADPICTY) lie on the Lumenal side of the membrane. A helical transmembrane segment spans residues 312 to 332 (IFSLLVAFTTFRIIWDTVVII). Residues 333–430 (LEGVPSHLNV…TCANCHSSST (98 aa)) lie on the Cytoplasmic side of the membrane.

Belongs to the cation diffusion facilitator (CDF) transporter (TC 2.A.4) family. SLC30A subfamily. Homodimerization could regulate efficiency for zinc transport. Interacts with TMEM163. In terms of tissue distribution, widely expressed. Highly expressed in the brain and in mammary epithelial cell lines.

It is found in the endosome membrane. The protein resides in the late endosome membrane. Its subcellular location is the lysosome membrane. It carries out the reaction Zn(2+)(in) + 2 H(+)(out) = Zn(2+)(out) + 2 H(+)(in). In terms of biological role, probable proton-coupled zinc ion antiporter mediating zinc import from cytoplasm potentially into the endocytic compartment. Controls zinc deposition in milk. This chain is Probable proton-coupled zinc antiporter SLC30A4, found in Mus musculus (Mouse).